The chain runs to 303 residues: UDP-3-O-acyl-N-acetylglucosamine deacetylase (303 aa).

Zn(2+)-binding residues include histidine 78, histidine 237, and aspartate 241. Histidine 264 functions as the Proton donor in the catalytic mechanism.

It belongs to the LpxC family. Zn(2+) is required as a cofactor.

The catalysed reaction is a UDP-3-O-[(3R)-3-hydroxyacyl]-N-acetyl-alpha-D-glucosamine + H2O = a UDP-3-O-[(3R)-3-hydroxyacyl]-alpha-D-glucosamine + acetate. It functions in the pathway glycolipid biosynthesis; lipid IV(A) biosynthesis; lipid IV(A) from (3R)-3-hydroxytetradecanoyl-[acyl-carrier-protein] and UDP-N-acetyl-alpha-D-glucosamine: step 2/6. Its function is as follows. Catalyzes the hydrolysis of UDP-3-O-myristoyl-N-acetylglucosamine to form UDP-3-O-myristoylglucosamine and acetate, the committed step in lipid A biosynthesis. The polypeptide is UDP-3-O-acyl-N-acetylglucosamine deacetylase (Cellvibrio japonicus (strain Ueda107) (Pseudomonas fluorescens subsp. cellulosa)).